The chain runs to 31 residues: Superoxide dismutase [Cu-Zn] (31 aa).

It belongs to the Cu-Zn superoxide dismutase family. Cu cation serves as cofactor. It depends on Zn(2+) as a cofactor.

The protein localises to the cytoplasm. The enzyme catalyses 2 superoxide + 2 H(+) = H2O2 + O2. Its function is as follows. Destroys radicals which are normally produced within the cells and which are toxic to biological systems. The sequence is that of Superoxide dismutase [Cu-Zn] from Striga hermonthica (Purple witchweed).